The following is a 190-amino-acid chain: MPPRPRFDRRAPVRELPNINERIKYPQLRVVDSDGKQLGVIDRLKALEIANQRELDLVLVSEKANPPVCRIMDYGKYKFEQEKKAKEARKKSHQTEVKEVKMRYKIDKHDYDVRIGQATKFLKSGDKVKCTVIFRGREIQHSNLAETLLLKMASDLEEQSEVQQKPKREGRNMIMFLSPRKSPLIKKDNE.

A disordered region spans residues 159–190; that stretch reads QSEVQQKPKREGRNMIMFLSPRKSPLIKKDNE.

This sequence belongs to the IF-3 family. As to quaternary structure, monomer.

The protein resides in the cytoplasm. Functionally, IF-3 binds to the 30S ribosomal subunit and shifts the equilibrium between 70S ribosomes and their 50S and 30S subunits in favor of the free subunits, thus enhancing the availability of 30S subunits on which protein synthesis initiation begins. This Prochlorococcus marinus (strain MIT 9215) protein is Translation initiation factor IF-3.